The primary structure comprises 124 residues: uncharacterized protein (124 aa).

This is an uncharacterized protein from Schizosaccharomyces pombe (strain 972 / ATCC 24843) (Fission yeast).